Reading from the N-terminus, the 148-residue chain is Large ribosomal subunit protein eL19 (148 aa).

Basic residues predominate over residues 52–76 (KPKKGISSYRSKKIAQQKKKGRRRG). The tract at residues 52–95 (KPKKGISSYRSKKIAQQKKKGRRRGPGSIKGAKGARRPKKDEWM) is disordered.

It belongs to the eukaryotic ribosomal protein eL19 family. Part of the 50S ribosomal subunit.

In terms of biological role, binds to the 23S rRNA. The chain is Large ribosomal subunit protein eL19 from Methanothermobacter thermautotrophicus (strain ATCC 29096 / DSM 1053 / JCM 10044 / NBRC 100330 / Delta H) (Methanobacterium thermoautotrophicum).